Reading from the N-terminus, the 92-residue chain is Ribonuclease P protein component 1 (92 aa).

The protein belongs to the eukaryotic/archaeal RNase P protein component 1 family. Consists of a catalytic RNA component and at least 4-5 protein subunits.

The protein localises to the cytoplasm. The enzyme catalyses Endonucleolytic cleavage of RNA, removing 5'-extranucleotides from tRNA precursor.. In terms of biological role, part of ribonuclease P, a protein complex that generates mature tRNA molecules by cleaving their 5'-ends. This Desulfurococcus amylolyticus (strain DSM 18924 / JCM 16383 / VKM B-2413 / 1221n) (Desulfurococcus kamchatkensis) protein is Ribonuclease P protein component 1.